The primary structure comprises 86 residues: Large ribosomal subunit protein bL31 (86 aa).

Residues 65–86 are disordered; that stretch reads YGMGSANSATSKEQKEEKDSKK. Over residues 76–86 the composition is skewed to basic and acidic residues; sequence KEQKEEKDSKK.

It belongs to the bacterial ribosomal protein bL31 family. Type A subfamily. In terms of assembly, part of the 50S ribosomal subunit.

Binds the 23S rRNA. The polypeptide is Large ribosomal subunit protein bL31 (Prochlorococcus marinus (strain AS9601)).